Consider the following 244-residue polypeptide: Chaperone protein FimB/FhaD (244 aa).

Residues 1–24 form the signal peptide; that stretch reads MARWRRRLGVAALGAAMLASLAPA.

This sequence belongs to the periplasmic pilus chaperone family.

The protein localises to the periplasm. Required for the biogenesis of the filamentous hemagglutinin and the fimbria. The polypeptide is Chaperone protein FimB/FhaD (fimB) (Bordetella pertussis (strain Tohama I / ATCC BAA-589 / NCTC 13251)).